A 254-amino-acid chain; its full sequence is MDRVKLTGVVLRAVDYGESDRVVTLLTAERGKVSAFARGARASRRRFGGALEPFTLLSAEVRERSGSDLLGLDSVSVVRGFGALRGDLGRIACAGYAAELARELVRDHQPHDELFDLLVAYLGALDAAPPRPAALRAFELGALRAAGLMPRLDACARCGAPVGEGPVRFDAGEGGALCGGCAPGVPRTLPLAAGTLAALLRLQEGGLAAAASEPLAAPAGREAREALTAFLEHHLGRRLAARRFLDEIGPLLGG.

The protein belongs to the RecO family.

Involved in DNA repair and RecF pathway recombination. This is DNA repair protein RecO from Anaeromyxobacter dehalogenans (strain 2CP-C).